The sequence spans 341 residues: Putative NADPH-dependent methylglyoxal reductase GRP2 (341 aa).

The NADP(+) site is built by Lys-40 and Tyr-171.

This sequence belongs to the NAD(P)-dependent epimerase/dehydratase family. Dihydroflavonol-4-reductase subfamily.

Its subcellular location is the cytoplasm. The enzyme catalyses (S)-lactaldehyde + NADP(+) = methylglyoxal + NADPH + H(+). Functionally, catalyzes the irreversible reduction of the cytotoxic compound methylglyoxal (MG, 2-oxopropanal) to (S)-lactaldehyde. MG is synthesized via a bypath of glycolysis from dihydroxyacetone phosphate and is believed to play a role in cell cycle regulation and stress adaptation. The chain is Putative NADPH-dependent methylglyoxal reductase GRP2 (GRP2) from Candida albicans (strain SC5314 / ATCC MYA-2876) (Yeast).